The chain runs to 205 residues: MSDPSSINGGIVVAMTGKDCVAIACDLRLGSQSLGVSNKFEKIFHYGHVFLGITGLATDVTTLNEMFRYKTNLYKLKEERAIEPETFTQLVSSSLYERRFGPYFVGPVVAGINSKSGKPFIAGFDLIGCIDEAKDFIVSGTASDQLFGMCESLYEPNLEPEDLFETISQALLNAADRDALSGWGAVVYIIKKDEVVKRYLKMRQD.

A Phosphoserine modification is found at serine 31. A Glycyl lysine isopeptide (Lys-Gly) (interchain with G-Cter in ubiquitin) cross-link involves residue lysine 70.

The protein belongs to the peptidase T1B family. As to quaternary structure, the 26S proteasome consists of a 20S proteasome core and two 19S regulatory subunits. The 20S proteasome core is composed of 28 subunits that are arranged in four stacked rings, resulting in a barrel-shaped structure. The two end rings are each formed by seven alpha subunits, and the two central rings are each formed by seven beta subunits. The catalytic chamber with the active sites is on the inside of the barrel.

It is found in the cytoplasm. Its subcellular location is the nucleus. Its function is as follows. Non-catalytic component of the proteasome which degrades poly-ubiquitinated proteins in the cytoplasm and in the nucleus. It is essential for the regulated turnover of proteins and for the removal of misfolded proteins. The proteasome is a multicatalytic proteinase complex that is characterized by its ability to cleave peptides with Arg, Phe, Tyr, Leu, and Glu adjacent to the leaving group at neutral or slightly basic pH. It has an ATP-dependent proteolytic activity. This subunit may participate in the trypsin-like activity of the enzyme complex. The protein is Proteasome subunit beta type-3 (PUP3) of Saccharomyces cerevisiae (strain ATCC 204508 / S288c) (Baker's yeast).